The chain runs to 264 residues: 3-methyl-2-oxobutanoate hydroxymethyltransferase (264 aa).

Positions 45 and 84 each coordinate Mg(2+). Residues 45–46 (DS), Asp84, and Lys112 contribute to the 3-methyl-2-oxobutanoate site. Glu114 is a binding site for Mg(2+). The Proton acceptor role is filled by Glu181.

Belongs to the PanB family. Homodecamer; pentamer of dimers. Requires Mg(2+) as cofactor.

Its subcellular location is the cytoplasm. It carries out the reaction 3-methyl-2-oxobutanoate + (6R)-5,10-methylene-5,6,7,8-tetrahydrofolate + H2O = 2-dehydropantoate + (6S)-5,6,7,8-tetrahydrofolate. The protein operates within cofactor biosynthesis; (R)-pantothenate biosynthesis; (R)-pantoate from 3-methyl-2-oxobutanoate: step 1/2. Its function is as follows. Catalyzes the reversible reaction in which hydroxymethyl group from 5,10-methylenetetrahydrofolate is transferred onto alpha-ketoisovalerate to form ketopantoate. The protein is 3-methyl-2-oxobutanoate hydroxymethyltransferase of Escherichia coli O127:H6 (strain E2348/69 / EPEC).